The primary structure comprises 303 residues: Cysteine synthase B (303 aa).

N6-(pyridoxal phosphate)lysine is present on Lys-41. Residues Asn-71, 174–178 (GTTGT), and Ser-255 contribute to the pyridoxal 5'-phosphate site.

The protein belongs to the cysteine synthase/cystathionine beta-synthase family. In terms of assembly, homodimer. It depends on pyridoxal 5'-phosphate as a cofactor.

It catalyses the reaction O-acetyl-L-serine + hydrogen sulfide = L-cysteine + acetate. It functions in the pathway amino-acid biosynthesis; L-cysteine biosynthesis; L-cysteine from L-serine: step 2/2. In terms of biological role, two cysteine synthase enzymes are found. Both catalyze the same reaction. Cysteine synthase B can also use thiosulfate in place of sulfide to give cysteine thiosulfonate as a product. This chain is Cysteine synthase B (cysM), found in Escherichia coli (strain K12).